A 245-amino-acid chain; its full sequence is tRNA (guanine-N(1)-)-methyltransferase (245 aa).

Residues Gly-113 and 133–138 (IGDYVL) contribute to the S-adenosyl-L-methionine site.

Belongs to the RNA methyltransferase TrmD family. Homodimer.

The protein localises to the cytoplasm. It carries out the reaction guanosine(37) in tRNA + S-adenosyl-L-methionine = N(1)-methylguanosine(37) in tRNA + S-adenosyl-L-homocysteine + H(+). Its function is as follows. Specifically methylates guanosine-37 in various tRNAs. The chain is tRNA (guanine-N(1)-)-methyltransferase from Oceanobacillus iheyensis (strain DSM 14371 / CIP 107618 / JCM 11309 / KCTC 3954 / HTE831).